The following is a 289-amino-acid chain: S-methyl-5'-thioadenosine phosphorylase (289 aa).

Phosphate-binding positions include serine 11, 53-54 (RH), and 86-87 (SA). Methionine 187 is a substrate binding site. Threonine 188 provides a ligand contact to phosphate. 211 to 213 (DYD) is a binding site for substrate.

The protein belongs to the PNP/MTAP phosphorylase family. MTAP subfamily. In terms of assembly, homohexamer. Dimer of a homotrimer.

It catalyses the reaction S-methyl-5'-thioadenosine + phosphate = 5-(methylsulfanyl)-alpha-D-ribose 1-phosphate + adenine. It functions in the pathway amino-acid biosynthesis; L-methionine biosynthesis via salvage pathway; S-methyl-5-thio-alpha-D-ribose 1-phosphate from S-methyl-5'-thioadenosine (phosphorylase route): step 1/1. In terms of biological role, catalyzes the reversible phosphorylation of S-methyl-5'-thioadenosine (MTA) to adenine and 5-methylthioribose-1-phosphate. Involved in the breakdown of MTA, a major by-product of polyamine biosynthesis. Responsible for the first step in the methionine salvage pathway after MTA has been generated from S-adenosylmethionine. Has broad substrate specificity with 6-aminopurine nucleosides as preferred substrates. The sequence is that of S-methyl-5'-thioadenosine phosphorylase from Thermosynechococcus vestitus (strain NIES-2133 / IAM M-273 / BP-1).